We begin with the raw amino-acid sequence, 229 residues long: Ribonuclease HII (229 aa).

The RNase H type-2 domain occupies 34-225; that stretch reads GPVAGVDEAG…VKAAHDQWLQ (192 aa). A divalent metal cation is bound by residues aspartate 40, glutamate 41, and aspartate 134.

It belongs to the RNase HII family. Requires Mn(2+) as cofactor. It depends on Mg(2+) as a cofactor.

The protein resides in the cytoplasm. The catalysed reaction is Endonucleolytic cleavage to 5'-phosphomonoester.. Its function is as follows. Endonuclease that specifically degrades the RNA of RNA-DNA hybrids. In Corynebacterium diphtheriae (strain ATCC 700971 / NCTC 13129 / Biotype gravis), this protein is Ribonuclease HII.